We begin with the raw amino-acid sequence, 327 residues long: Movement protein (327 aa).

Residues 297-327 adopt a coiled-coil conformation; that stretch reads SASSSNTENELARVSQNIDLLKNKLKEICGE.

This sequence belongs to the caulimoviridae movement protein family. As to quaternary structure, homotrimer, through the coiled-coil domain. Interacts with VAP. May interact (via N-terminus) with host prenylated Rab acceptor protein 1D (PRA1D).

Its subcellular location is the host cell junction. It localises to the host plasmodesma. In terms of biological role, transports viral genome to neighboring plant cells directly through plasmosdesmata, without any budding. The movement protein allows efficient cell to cell propagation, by bypassing the host cell wall barrier. Acts by forming tubules structures that increase the size exclusion limit (SEL) of plasmodesmata, thereby allowing viral ribonucleocapsids to spread directly to neighboring cells. This Cauliflower mosaic virus (strain Strasbourg) (CaMV) protein is Movement protein.